The following is a 489-amino-acid chain: tRNA(Ile)-lysidine synthase (489 aa).

An ATP-binding site is contributed by 35–40 (SGGLDS).

It belongs to the tRNA(Ile)-lysidine synthase family.

The protein localises to the cytoplasm. It catalyses the reaction cytidine(34) in tRNA(Ile2) + L-lysine + ATP = lysidine(34) in tRNA(Ile2) + AMP + diphosphate + H(+). In terms of biological role, ligates lysine onto the cytidine present at position 34 of the AUA codon-specific tRNA(Ile) that contains the anticodon CAU, in an ATP-dependent manner. Cytidine is converted to lysidine, thus changing the amino acid specificity of the tRNA from methionine to isoleucine. This is tRNA(Ile)-lysidine synthase from Burkholderia mallei (strain ATCC 23344).